A 368-amino-acid polypeptide reads, in one-letter code: Glutamate 5-kinase (368 aa).

Residue Lys9 participates in ATP binding. Positions 49, 136, and 148 each coordinate substrate. Residues 168–169 (TD) and 210–216 (TGGMMTK) each bind ATP. The PUA domain maps to 275-353 (AGIITIDNGA…ADIENVLGYE (79 aa)).

This sequence belongs to the glutamate 5-kinase family.

It is found in the cytoplasm. The enzyme catalyses L-glutamate + ATP = L-glutamyl 5-phosphate + ADP. Its pathway is amino-acid biosynthesis; L-proline biosynthesis; L-glutamate 5-semialdehyde from L-glutamate: step 1/2. Catalyzes the transfer of a phosphate group to glutamate to form L-glutamate 5-phosphate. The chain is Glutamate 5-kinase from Haemophilus influenzae (strain PittEE).